Consider the following 162-residue polypeptide: MSEIVIRHAETRDYEAIRQIHAQPEVYCNTLQVPHPSDHMWQERLADRPGIKQLVACIDGDVVGHLTIDVQQRPRRSHVADFGICVDSRWKNRGVASALMREMIEMCDNWLRVDRIELTVFVDNAPAIKVYKKYGFEIEGTGKKYALRNGEYVDAYYMARVK.

Positions 4-162 (IVIRHAETRD…VDAYYMARVK (159 aa)) constitute an N-acetyltransferase domain.

The protein belongs to the acetyltransferase family.

The enzyme catalyses L-phenylalanine + acetyl-CoA = N-acetyl-L-phenylalanine + CoA + H(+). It carries out the reaction L-methionine + acetyl-CoA = N-acetyl-L-methionine + CoA + H(+). Its function is as follows. Catalyzes the N-acetylation of L-phenylalanine and L-methionine using acetyl-CoA as acetyl donor in vitro. Cannot accept L-tyrosine as substrate and propionyl-CoA, succinyl-CoA or (S)-methylmalonyl-CoA as acyl donors. Is also able to acetylate and thus detoxify several nonhydrolyzable aminoacyl adenylates, but not the processed form of the peptide-nucleotide antibiotic microcin C (McC). When overproduced, provides complete resistance to leucyl sulfamoyl adenylate (LSA) and partial resistance to alanyl sulfamoyl adenylate (ASA) and phenylalanyl sulfamoyl adenylate (FSA). Therefore, may protect bacteria from various toxic aminoacyl nucleotides, either exogenous or those generated inside the cell during normal metabolism. The protein is L-amino acid N-acetyltransferase AaaT of Escherichia coli (strain K12).